A 650-amino-acid polypeptide reads, in one-letter code: 1-deoxy-D-xylulose-5-phosphate synthase 2 (650 aa).

Thiamine diphosphate contacts are provided by residues His-79 and 120 to 122; that span reads AHS. Asp-151 is a binding site for Mg(2+). Thiamine diphosphate is bound by residues 152 to 153, Asn-180, Tyr-289, and Glu-371; that span reads GS. Position 180 (Asn-180) interacts with Mg(2+).

It belongs to the transketolase family. DXPS subfamily. In terms of assembly, homodimer. Requires Mg(2+) as cofactor. Thiamine diphosphate serves as cofactor.

The enzyme catalyses D-glyceraldehyde 3-phosphate + pyruvate + H(+) = 1-deoxy-D-xylulose 5-phosphate + CO2. It functions in the pathway metabolic intermediate biosynthesis; 1-deoxy-D-xylulose 5-phosphate biosynthesis; 1-deoxy-D-xylulose 5-phosphate from D-glyceraldehyde 3-phosphate and pyruvate: step 1/1. In terms of biological role, catalyzes the acyloin condensation reaction between C atoms 2 and 3 of pyruvate and glyceraldehyde 3-phosphate to yield 1-deoxy-D-xylulose-5-phosphate (DXP). In Zymomonas mobilis subsp. mobilis (strain ATCC 31821 / ZM4 / CP4), this protein is 1-deoxy-D-xylulose-5-phosphate synthase 2.